The primary structure comprises 354 residues: Methylthioribose-1-phosphate isomerase (354 aa).

Residues Arg-45–Ala-47, Arg-87, and Gln-204 each bind substrate. The active-site Proton donor is the Asp-245. Asn-255–Lys-256 lines the substrate pocket.

Belongs to the eIF-2B alpha/beta/delta subunits family. MtnA subfamily.

It carries out the reaction 5-(methylsulfanyl)-alpha-D-ribose 1-phosphate = 5-(methylsulfanyl)-D-ribulose 1-phosphate. The protein operates within amino-acid biosynthesis; L-methionine biosynthesis via salvage pathway; L-methionine from S-methyl-5-thio-alpha-D-ribose 1-phosphate: step 1/6. Its function is as follows. Catalyzes the interconversion of methylthioribose-1-phosphate (MTR-1-P) into methylthioribulose-1-phosphate (MTRu-1-P). The sequence is that of Methylthioribose-1-phosphate isomerase from Chlorobaculum tepidum (strain ATCC 49652 / DSM 12025 / NBRC 103806 / TLS) (Chlorobium tepidum).